The following is a 1152-amino-acid chain: Nardilysin (1152 aa).

The first 20 residues, 1–20, serve as a signal peptide directing secretion; sequence MLRKVTVAAVCATRRKLCEA. 2 disordered regions span residues 81 to 108 and 133 to 208; these read LGAD…KSPS and MEGK…KKTT. 3 positions are modified to phosphoserine: S86, S94, and S96. The segment covering 141–198 has biased composition (acidic residues); it reads TDDEEEEEVEEEEEDDDEDSGAEIEDDDEEGFDDEDEFDDEHDDDLDTEDNELEELEE. Residue H234 participates in Zn(2+) binding. The active-site Proton acceptor is the E237. Residues H238 and E315 each coordinate Zn(2+).

Belongs to the peptidase M16 family. Interacts with BACE1 and NRG1. Zn(2+) is required as a cofactor.

It localises to the mitochondrion. Its subcellular location is the cell projection. The protein localises to the dendrite. It carries out the reaction Hydrolysis of polypeptides, preferably at -Xaa-|-Arg-Lys-, and less commonly at -Arg-|-Arg-Xaa-, in which Xaa is not Arg or Lys.. In terms of biological role, cleaves peptide substrates on the N-terminus of arginine residues in dibasic pairs. Is a critical activator of BACE1- and ADAM17-mediated pro-neuregulin ectodomain shedding, involved in the positive regulation of axonal maturation and myelination. Required for proper functioning of 2-oxoglutarate dehydrogenase (OGDH). In Pongo abelii (Sumatran orangutan), this protein is Nardilysin.